The following is a 237-amino-acid chain: Ubiquinone biosynthesis O-methyltransferase (237 aa).

S-adenosyl-L-methionine is bound by residues R39, G59, D80, and M124.

It belongs to the methyltransferase superfamily. UbiG/COQ3 family.

The catalysed reaction is a 3-demethylubiquinol + S-adenosyl-L-methionine = a ubiquinol + S-adenosyl-L-homocysteine + H(+). It catalyses the reaction a 3-(all-trans-polyprenyl)benzene-1,2-diol + S-adenosyl-L-methionine = a 2-methoxy-6-(all-trans-polyprenyl)phenol + S-adenosyl-L-homocysteine + H(+). It functions in the pathway cofactor biosynthesis; ubiquinone biosynthesis. O-methyltransferase that catalyzes the 2 O-methylation steps in the ubiquinone biosynthetic pathway. The polypeptide is Ubiquinone biosynthesis O-methyltransferase (Vibrio atlanticus (strain LGP32) (Vibrio splendidus (strain Mel32))).